We begin with the raw amino-acid sequence, 212 residues long: MQILLAALVAYLIGSVSFAVIVSAAMGLADPRSYGSKNPGATNVLRSGNKKAAILTLVGDAFKGWLAVWLARHFGMPDVAVAWVAIAVFVGHLYPVFFRFQGGKGVATAAGVLLAVHPVLGLATALTWLIVAFFFRYSSLAALVAAVFAPVFDVFLFGTRNNPIAWAVLAMSVLLVWRHRGNIAKLLAGQESRIGDKKKAAADGGAQGGGKV.

Helical transmembrane passes span isoleucine 3–serine 23, lysine 51–alanine 71, aspartate 78–phenylalanine 98, alanine 115–phenylalanine 135, and serine 139–threonine 159.

It belongs to the PlsY family. Probably interacts with PlsX.

The protein resides in the cell inner membrane. The catalysed reaction is an acyl phosphate + sn-glycerol 3-phosphate = a 1-acyl-sn-glycero-3-phosphate + phosphate. The protein operates within lipid metabolism; phospholipid metabolism. In terms of biological role, catalyzes the transfer of an acyl group from acyl-phosphate (acyl-PO(4)) to glycerol-3-phosphate (G3P) to form lysophosphatidic acid (LPA). This enzyme utilizes acyl-phosphate as fatty acyl donor, but not acyl-CoA or acyl-ACP. In Burkholderia vietnamiensis (strain G4 / LMG 22486) (Burkholderia cepacia (strain R1808)), this protein is Glycerol-3-phosphate acyltransferase.